We begin with the raw amino-acid sequence, 136 residues long: Transmembrane protein 203 (136 aa).

The next 4 membrane-spanning stretches (helical) occupy residues 14-34, 50-72, 81-101, and 112-132; these read FAQLEIFLHISALLVFTVLLA, FIPFFTADGLSTYFTTIVTVRLF, VLRLFWILTILSLKFIFEMLL, and LWYGLIMSPIFILLQLLMIRA.

It is found in the endoplasmic reticulum membrane. The protein localises to the endoplasmic reticulum-Golgi intermediate compartment. Its function is as follows. Involved in the regulation of cellular calcium homeotasis. May act as a regulator of STING-mediated inflammatory signaling in macrophages. The chain is Transmembrane protein 203 (tmem203) from Xenopus laevis (African clawed frog).